A 56-amino-acid polypeptide reads, in one-letter code: Large ribosomal subunit protein bL32 (56 aa).

This sequence belongs to the bacterial ribosomal protein bL32 family.

The chain is Large ribosomal subunit protein bL32 from Prochlorococcus marinus (strain MIT 9301).